A 768-amino-acid chain; its full sequence is DNA topoisomerase 4 subunit A (768 aa).

In terms of domain architecture, Topo IIA-type catalytic spans 38–521 (LPEVSDGQKP…AGRAVLTQTA (484 aa)). The active-site O-(5'-phospho-DNA)-tyrosine intermediate is Tyr126.

The protein belongs to the type II topoisomerase GyrA/ParC subunit family. ParC type 1 subfamily. Heterotetramer composed of ParC and ParE.

The protein resides in the cell membrane. It carries out the reaction ATP-dependent breakage, passage and rejoining of double-stranded DNA.. Functionally, topoisomerase IV is essential for chromosome segregation. It relaxes supercoiled DNA. Performs the decatenation events required during the replication of a circular DNA molecule. The polypeptide is DNA topoisomerase 4 subunit A (Neisseria gonorrhoeae).